Reading from the N-terminus, the 124-residue chain is Bactoprenol-linked glucose translocase (124 aa).

The next 4 membrane-spanning stretches (helical) occupy residues 12–32 (FFSY…VFYA), 45–65 (NIVG…RCSF), 75–95 (FIFI…FDLL), and 96–116 (ALSP…LGYC).

The protein belongs to the GtrA family.

It is found in the cell membrane. It functions in the pathway bacterial outer membrane biogenesis; lipopolysaccharide biosynthesis. Its function is as follows. Involved in O antigen modification. Involved in the translocation of bactoprenol-linked glucose across the cytoplasmic membrane. This Shigella flexneri protein is Bactoprenol-linked glucose translocase (rfbI).